A 416-amino-acid polypeptide reads, in one-letter code: Homogentisate 1,2-dioxygenase (416 aa).

Catalysis depends on His-275, which acts as the Proton acceptor. Residues His-318 and Glu-324 each contribute to the Fe cation site. Positions 333 and 354 each coordinate homogentisate. His-354 is a Fe cation binding site.

This sequence belongs to the homogentisate dioxygenase family. As to quaternary structure, hexamer; dimer of trimers. Fe cation is required as a cofactor.

The catalysed reaction is homogentisate + O2 = 4-maleylacetoacetate + H(+). The protein operates within amino-acid degradation; L-phenylalanine degradation; acetoacetate and fumarate from L-phenylalanine: step 4/6. Functionally, involved in the catabolism of homogentisate (2,5-dihydroxyphenylacetate or 2,5-OH-PhAc), a central intermediate in the degradation of phenylalanine and tyrosine. Catalyzes the oxidative ring cleavage of the aromatic ring of homogentisate to yield maleylacetoacetate. This Legionella pneumophila subsp. pneumophila (strain Philadelphia 1 / ATCC 33152 / DSM 7513) protein is Homogentisate 1,2-dioxygenase.